The following is a 227-amino-acid chain: uncharacterized protein (227 aa).

It belongs to the flavoredoxin family. The cofactor is FMN.

This is an uncharacterized protein from Deinococcus radiodurans (strain ATCC 13939 / DSM 20539 / JCM 16871 / CCUG 27074 / LMG 4051 / NBRC 15346 / NCIMB 9279 / VKM B-1422 / R1).